Reading from the N-terminus, the 261-residue chain is Cytochrome c oxidase subunit 3 (261 aa).

At 1-15 (MAHQAHAYHMVDPSP) the chain is on the mitochondrial matrix side. A helical transmembrane segment spans residues 16–34 (WPLTGAIAALLLTSGTAVW). Over 35-40 (FHFHSL) the chain is Mitochondrial intermembrane. Residues 41-66 (TLLTLGNILLLLTMYQWWRDIIREGT) traverse the membrane as a helical segment. The Mitochondrial matrix segment spans residues 67–72 (FQGHHT). The helical transmembrane segment at 73-105 (PPVQKGLRYGMILFITSEVFFFLGFFWAFYHAS) threads the bilayer. At 106–128 (LAPTPELGGCWPPTGITTLDPFE) the chain is on the mitochondrial intermembrane side. A helical transmembrane segment spans residues 129–152 (VPLLNTAVLLASGVTVTWAHHSIM). Residues 153–155 (EGE) lie on the Mitochondrial matrix side of the membrane. A helical transmembrane segment spans residues 156-183 (RKQTIQALTLTILLGFYFTFLQGMEYYE). The Mitochondrial intermembrane segment spans residues 184-190 (APFTIAD). The chain crosses the membrane as a helical span at residues 191-223 (GVYGSTFFVATGFHGLHVIIGSTFLAVCLLRQV). The Mitochondrial matrix portion of the chain corresponds to 224–232 (QYHFTSEHH). The chain crosses the membrane as a helical span at residues 233-256 (FGFEAAAWYWHFVDVVWLFLYVSI). The Mitochondrial intermembrane portion of the chain corresponds to 257-261 (YWWGS).

It belongs to the cytochrome c oxidase subunit 3 family. In terms of assembly, component of the cytochrome c oxidase (complex IV, CIV), a multisubunit enzyme composed of 14 subunits. The complex is composed of a catalytic core of 3 subunits MT-CO1, MT-CO2 and MT-CO3, encoded in the mitochondrial DNA, and 11 supernumerary subunits COX4I, COX5A, COX5B, COX6A, COX6B, COX6C, COX7A, COX7B, COX7C, COX8 and NDUFA4, which are encoded in the nuclear genome. The complex exists as a monomer or a dimer and forms supercomplexes (SCs) in the inner mitochondrial membrane with NADH-ubiquinone oxidoreductase (complex I, CI) and ubiquinol-cytochrome c oxidoreductase (cytochrome b-c1 complex, complex III, CIII), resulting in different assemblies (supercomplex SCI(1)III(2)IV(1) and megacomplex MCI(2)III(2)IV(2)).

It is found in the mitochondrion inner membrane. The catalysed reaction is 4 Fe(II)-[cytochrome c] + O2 + 8 H(+)(in) = 4 Fe(III)-[cytochrome c] + 2 H2O + 4 H(+)(out). Its function is as follows. Component of the cytochrome c oxidase, the last enzyme in the mitochondrial electron transport chain which drives oxidative phosphorylation. The respiratory chain contains 3 multisubunit complexes succinate dehydrogenase (complex II, CII), ubiquinol-cytochrome c oxidoreductase (cytochrome b-c1 complex, complex III, CIII) and cytochrome c oxidase (complex IV, CIV), that cooperate to transfer electrons derived from NADH and succinate to molecular oxygen, creating an electrochemical gradient over the inner membrane that drives transmembrane transport and the ATP synthase. Cytochrome c oxidase is the component of the respiratory chain that catalyzes the reduction of oxygen to water. Electrons originating from reduced cytochrome c in the intermembrane space (IMS) are transferred via the dinuclear copper A center (CU(A)) of subunit 2 and heme A of subunit 1 to the active site in subunit 1, a binuclear center (BNC) formed by heme A3 and copper B (CU(B)). The BNC reduces molecular oxygen to 2 water molecules using 4 electrons from cytochrome c in the IMS and 4 protons from the mitochondrial matrix. This is Cytochrome c oxidase subunit 3 (mt-co3) from Oncorhynchus clarkii (Cutthroat trout).